An 867-amino-acid chain; its full sequence is G-protein coupled receptor family C group 6 member A (867 aa).

An N-terminal signal peptide occupies residues 1-19 (MDLMSFILLWAGLMKVAEA). At 20–566 (SIAQFSQLGA…EYFDWNSGFA (547 aa)) the chain is on the extracellular side. 10 N-linked (GlcNAc...) asparagine glycosylation sites follow: Asn51, Asn55, Asn97, Asn296, Asn308, Asn336, Asn356, Asn370, Asn527, and Asn547. Residues 567-587 (IVLLILAALGVLLLFFMSALF) form a helical membrane-spanning segment. The Cytoplasmic portion of the chain corresponds to 588 to 602 (FWQRHSPVVKAAGGP). Residues 603-623 (LCHLILVSLLGSFISVVFFVG) form a helical membrane-spanning segment. Topologically, residues 624-634 (EPSDLTCRARQ) are extracellular. The chain crosses the membrane as a helical span at residues 635 to 655 (VIFGFSFTLCVSCILVKSLKI). Topologically, residues 656–675 (LLAFEMNFELKELLCMLYKP) are cytoplasmic. Residues 676–696 (YMIVSVGMGVQIIICTVWLTL) form a helical membrane-spanning segment. Residues 697 to 716 (YKPFKDKEVQTESILLECNE) are Extracellular-facing. A helical transmembrane segment spans residues 717 to 737 (GFYVMFWLMLGYIALLALFCF). The Cytoplasmic segment spans residues 738–754 (TFAYIGRKLPQKYNEAK). The chain crosses the membrane as a helical span at residues 755 to 775 (FITFSMVICLMAWIIFIPIHV). The Extracellular portion of the chain corresponds to 776-781 (TTSGKY). The helical transmembrane segment at 782 to 802 (VPAVEMVVILISNYGILSCHF) threads the bilayer. Residues 803–867 (LPKSYIILFK…LSFVPEEKHE (65 aa)) are Cytoplasmic-facing.

This sequence belongs to the G-protein coupled receptor 3 family. As to quaternary structure, homodimer; disulfide-linked.

The protein localises to the cell membrane. Functionally, olfactory receptor that is activated by amino acids that act as potent odorants in fish. Displays preference for acidic amino acids such as Glu over basic amino acids. The polypeptide is G-protein coupled receptor family C group 6 member A (gprc6a) (Danio rerio (Zebrafish)).